The sequence spans 417 residues: Serpin H1 (417 aa).

A signal peptide spans 1–17; it reads MRSLLLGTLCLLAVALA. Lys-93 is subject to N6-succinyllysine. N-linked (GlcNAc...) asparagine glycans are attached at residues Asn-119 and Asn-124. Residue Ser-140 is modified to Phosphoserine. At Lys-206 the chain carries N6-acetyllysine. Lys-295 carries the N6-succinyllysine modification. The residue at position 318 (Lys-318) is an N6-acetyllysine. An N-linked (GlcNAc...) asparagine glycan is attached at Asn-394. The short motif at 414–417 is the Prevents secretion from ER element; the sequence is RDEL.

This sequence belongs to the serpin family.

It is found in the endoplasmic reticulum lumen. Binds specifically to collagen. Could be involved as a chaperone in the biosynthetic pathway of collagen. This chain is Serpin H1 (Serpinh1), found in Mus musculus (Mouse).